Here is a 354-residue protein sequence, read N- to C-terminus: Phosphate acyltransferase (354 aa).

The protein belongs to the PlsX family. In terms of assembly, homodimer. Probably interacts with PlsY.

It is found in the cytoplasm. The enzyme catalyses a fatty acyl-[ACP] + phosphate = an acyl phosphate + holo-[ACP]. The protein operates within lipid metabolism; phospholipid metabolism. Functionally, catalyzes the reversible formation of acyl-phosphate (acyl-PO(4)) from acyl-[acyl-carrier-protein] (acyl-ACP). This enzyme utilizes acyl-ACP as fatty acyl donor, but not acyl-CoA. The sequence is that of Phosphate acyltransferase from Ralstonia nicotianae (strain ATCC BAA-1114 / GMI1000) (Ralstonia solanacearum).